Reading from the N-terminus, the 362-residue chain is MAMKKLLWVVLSLSLVLGVANSFDFHEKDLESEESLWDLYERWRSHHTVSRSLGEKHKRFNVFKANVMHVHNTNKMDKPYKLKLNKFADMTNHEFRSTYAGSKVNHHKMFRGSQHGSGTFMYEKVGSVPASVDWRKKGAVTDVKDQGQCGSCWAFSTIVAVEGINQIKTNKLVSLSEQELVDCDKEENQGCNGGLMESAFEFIKQKGGITTESNYPYTAQEGTCDESKVNDLAVSIDGHENVPVNDENALLKAVANQPVSVAIDAGGSDFQFYSEGVFTGDCNTDLNHGVAIVGYGTTVDGTNYWIVRNSWGPEWGEQGYIRMQRNISKKEGLCGIAMMASYPIKNSSDNPTGSLSSPKDEL.

An N-terminal signal peptide occupies residues 1-20 (MAMKKLLWVVLSLSLVLGVA). The propeptide at 21-126 (NSFDFHEKDL…SGTFMYEKVG (106 aa)) is activation peptide. 3 disulfides stabilise this stretch: C149-C191, C183-C224, and C282-C334. The active site involves C152. Residues H288 and N309 contribute to the active site. N326 and N346 each carry an N-linked (GlcNAc...) asparagine glycan. Positions 353-362 (GSLSSPKDEL) are cleaved as a propeptide — removed in mature form. The short motif at 359-362 (KDEL) is the Prevents secretion from ER element.

Belongs to the peptidase C1 family. The mature protein is not glycosylated. Post-translationally, the precursor stored in the endoplasmic reticulum lumen is processed during the transport to proteins bodies to two dominant mature forms that differ by a single amino acid residue at the N-terminus.

It is found in the endoplasmic reticulum lumen. Its subcellular location is the vacuole. It localises to the aleurone grain. Functionally, thought to be involved in the hydrolysis of stored seed proteins. In vitro, catalyzes the hydrolysis of proteins, such as azocasein. Shows a preferential cleavage for Asn-|-Xaa in small molecule substrates such as Boc-Asn-|-OPHNO(2). The polypeptide is Vignain (Vigna mungo (Black gram)).